The following is a 546-amino-acid chain: Glutathione reductase (546 aa).

The N-terminal 45 residues, 2 to 46 (YKHRYFHFFFFFFFFLVSTKIIRSFTFLNNNTNLSNPVYFKKKAN), are a transit peptide targeting the apicoplast. 2 residues coordinate FAD: Ser58 and Gly59. Ser58 lines the glutathione pocket. Arg65 contributes to the glutathione binding site. Glu78, Thr85, Cys86, and Lys94 together coordinate FAD. A disulfide bond links Cys86 and Cys91. Tyr141 contacts glutathione. Ala157 contributes to the FAD binding site. Positions 233, 236, 253, 259, and 318 each coordinate NADP(+). Positions 358 and 400 each coordinate FAD. Arg408 is a glutathione binding site. Val430 is a binding site for NADP(+). His531 serves as a coordination point for FAD. His531 acts as the Proton acceptor in catalysis.

This sequence belongs to the class-I pyridine nucleotide-disulfide oxidoreductase family. Homodimer. The cofactor is FAD.

It localises to the cytoplasm. It is found in the plastid. Its subcellular location is the apicoplast. The enzyme catalyses 2 glutathione + NADP(+) = glutathione disulfide + NADPH + H(+). Catalyzes the reduction of glutathione disulfide (GSSG) to reduced glutathione (GSH). Constitutes the major mechanism to maintain a high GSH:GSSG ratio in the cytosol. This chain is Glutathione reductase, found in Plasmodium falciparum (isolate 3D7).